Consider the following 431-residue polypeptide: MRMIIKNGTVIDGFGSEATADILIDYGIIKAIDKNIQVSDGIVIDATGKYVLPGFVDMHTHLRQPGFEEKETIKTGTEAAATGGYTTVACMPNTNPPIDNEIVVEYVKSIAQREGVVKVLPIGAMTKGMKGEEITEMAKLKKAGVVALSDDGFPIMSAGLMKRIMTYGKMYDLLMITHCEDKALSGEGVMNSGVISTMIGLKGIPREAEEVMLARNIILAKSTGVRLHIAHISTKGSVELIREAKEKGVKITAEVTPHNLTLTDEAVYNYDTNTKAYPPLRTREDIEALIEGLKDGTIDAIATDHAPHTKDDKKVPYDMAAFGISGLETAFSVINTFLVQTGKITIKELVNYMSINPAKILGISSGIKVGSIADIVIVDPYEEYVVDKDKFKSKGKNTPFHGMRLKGVVDCTIVEGEIKYKKDRKTEKVEV.

Residues H59 and H61 each contribute to the Zn(2+) site. Substrate contacts are provided by residues 61–63 (HLR) and N93. The Zn(2+) site is built by D151, H178, H231, and D304. D304 is a catalytic residue. Residues H308 and 322-323 (FG) contribute to the substrate site.

Belongs to the metallo-dependent hydrolases superfamily. DHOase family. Class I DHOase subfamily. The cofactor is Zn(2+).

It carries out the reaction (S)-dihydroorotate + H2O = N-carbamoyl-L-aspartate + H(+). The protein operates within pyrimidine metabolism; UMP biosynthesis via de novo pathway; (S)-dihydroorotate from bicarbonate: step 3/3. Its function is as follows. Catalyzes the reversible cyclization of carbamoyl aspartate to dihydroorotate. The chain is Dihydroorotase from Thermoanaerobacter sp. (strain X514).